A 270-amino-acid chain; its full sequence is Bifunctional folate synthesis protein (270 aa).

Residues 1–119 (MDQLQIKDLE…TCSVTIHRRK (119 aa)) form a DHNA region. Substrate-binding positions include Glu21, Tyr53, and 72–73 (IE). Lys99 functions as the Proton donor/acceptor; for DHNA activity in the catalytic mechanism. The interval 120–270 (QRAFIALGSN…IRNLYDALKK (151 aa)) is HPPK. Residues 160–163 (TEPW), 171–173 (FAN), 192–195 (LAIE), 200–215 (RVRE…DLDL), 227–233 (DLILPHP), and 238–240 (RLF) contribute to the ATP site. Mg(2+) contacts are provided by Asp212 and Asp214.

The protein in the N-terminal section; belongs to the DHNA family. This sequence in the C-terminal section; belongs to the HPPK family. In terms of assembly, homotrimer or homotetramer.

It catalyses the reaction 7,8-dihydroneopterin = 6-hydroxymethyl-7,8-dihydropterin + glycolaldehyde. The catalysed reaction is 6-hydroxymethyl-7,8-dihydropterin + ATP = (7,8-dihydropterin-6-yl)methyl diphosphate + AMP + H(+). The protein operates within cofactor biosynthesis; tetrahydrofolate biosynthesis; 2-amino-4-hydroxy-6-hydroxymethyl-7,8-dihydropteridine diphosphate from 7,8-dihydroneopterin triphosphate: step 3/4. It participates in cofactor biosynthesis; tetrahydrofolate biosynthesis; 2-amino-4-hydroxy-6-hydroxymethyl-7,8-dihydropteridine diphosphate from 7,8-dihydroneopterin triphosphate: step 4/4. In terms of biological role, catalyzes two sequential steps of tetrahydrofolate biosynthesis, the conversion of 7,8-dihydroneopterin to 6-hydroxymethyl-7,8-dihydropterin diphosphate. The polypeptide is Bifunctional folate synthesis protein (Streptococcus pneumoniae serotype 4 (strain ATCC BAA-334 / TIGR4)).